We begin with the raw amino-acid sequence, 88 residues long: Small ribosomal subunit protein bS20 (88 aa).

It belongs to the bacterial ribosomal protein bS20 family.

Functionally, binds directly to 16S ribosomal RNA. In Heliobacterium modesticaldum (strain ATCC 51547 / Ice1), this protein is Small ribosomal subunit protein bS20.